We begin with the raw amino-acid sequence, 133 residues long: Nickel-responsive regulator (133 aa).

Ni(2+) is bound by residues histidine 76, histidine 87, histidine 89, and cysteine 95.

Belongs to the transcriptional regulatory CopG/NikR family. In terms of assembly, homotetramer. Ni(2+) is required as a cofactor.

Its function is as follows. Transcriptional repressor of the nikABCDE operon. Is active in the presence of excessive concentrations of intracellular nickel. This Salmonella paratyphi A (strain ATCC 9150 / SARB42) protein is Nickel-responsive regulator.